The sequence spans 108 residues: Nucleoid-associated protein Pmen_2646 (108 aa).

The disordered stretch occupies residues 1–25 (MMKGGMAGLMKQAQQMQEKMQKMQE).

The protein belongs to the YbaB/EbfC family. In terms of assembly, homodimer.

It is found in the cytoplasm. Its subcellular location is the nucleoid. In terms of biological role, binds to DNA and alters its conformation. May be involved in regulation of gene expression, nucleoid organization and DNA protection. This Ectopseudomonas mendocina (strain ymp) (Pseudomonas mendocina) protein is Nucleoid-associated protein Pmen_2646.